We begin with the raw amino-acid sequence, 103 residues long: UPF0145 protein BCE_5284 (103 aa).

This sequence belongs to the UPF0145 family.

In Bacillus cereus (strain ATCC 10987 / NRS 248), this protein is UPF0145 protein BCE_5284.